Here is a 1235-residue protein sequence, read N- to C-terminus: Chitin synthase 4 (1235 aa).

Residues 1-11 (MSLPRRPGPSP) are compositionally biased toward pro residues. Positions 1-203 (MSLPRRPGPS…ASKGKREKSG (203 aa)) are disordered. Over 1-212 (MSLPRRPGPS…GGLPTPSFWN (212 aa)) the chain is Cytoplasmic. Residues 19–28 (YRQSGSRRSR) show a composition bias toward basic residues. The segment covering 46–59 (PSQQQRVPSISSFP) has biased composition (polar residues). A compositionally biased stretch (basic and acidic residues) spans 94–107 (IRPERNRIGKDHPN). Residues 116–125 (NMNTLPSSTG) show a composition bias toward polar residues. Residues 169–187 (ETEKSGDERRRRRKSDTTK) are compositionally biased toward basic and acidic residues. Residues 188–199 (HGKIVKASKGKR) show a composition bias toward basic residues. A helical transmembrane segment spans residues 213 to 233 (IYCGFVTFWCPGFVLKCFGMP). Over 234–244 (EMAQQRAWREK) the chain is Extracellular. The chain crosses the membrane as a helical span at residues 245-265 (MGLISIILLIMGFVGFITFGF). Over 266–514 (TQVVCGKPPL…ASKVVLYVSL (249 aa)) the chain is Cytoplasmic. The helical transmembrane segment at 515-535 (VLILAVVLARFVLALIFQWFI) threads the bilayer. The Extracellular portion of the chain corresponds to 536–1065 (SKTYAAAKTS…SMQFIVGIEL (530 aa)). The tract at residues 545–592 (SQTSDQRKRNRQIEDWTEDIYRAPPRLPGEVGSSVAGSSDRQSKRSSA) is disordered. Positions 549–558 (DQRKRNRQIE) are enriched in basic and acidic residues. N-linked (GlcNAc...) asparagine glycosylation is present at Asn639. The tract at residues 645–670 (FLKSDAYGSSSSPADGPGPAGFIHEA) is disordered. Low complexity predominate over residues 648-665 (SDAYGSSSSPADGPGPAG). N-linked (GlcNAc...) asparagine glycosylation is present at Asn1034. A helical transmembrane segment spans residues 1066–1086 (IGTLVLPAAIAFTFYVVIISI). Topologically, residues 1087–1092 (INSPPQ) are cytoplasmic. The chain crosses the membrane as a helical span at residues 1093–1113 (IIPLVLLGLILGLPAILVVVT). Residues 1114-1116 (AHS) lie on the Extracellular side of the membrane. A helical transmembrane segment spans residues 1117–1137 (WSYIIWMFIYLLSLPVWNFVL). At 1138-1235 (PTYAFWKFDD…RHFDDYFSDA (98 aa)) the chain is on the cytoplasmic side. Residues 1201 to 1235 (RDNVISGVGGSNGWGSSQPRGHEQGRHFDDYFSDA) are disordered. Residues 1220 to 1235 (RGHEQGRHFDDYFSDA) are compositionally biased toward basic and acidic residues.

It belongs to the chitin synthase family. Class IV subfamily.

It is found in the cell membrane. It catalyses the reaction [(1-&gt;4)-N-acetyl-beta-D-glucosaminyl](n) + UDP-N-acetyl-alpha-D-glucosamine = [(1-&gt;4)-N-acetyl-beta-D-glucosaminyl](n+1) + UDP + H(+). Its function is as follows. Polymerizes chitin, a structural polymer of the cell wall and septum, by transferring the sugar moiety of UDP-GlcNAc to the non-reducing end of the growing chitin polymer. This is Chitin synthase 4 (chs-4) from Neurospora crassa (strain ATCC 24698 / 74-OR23-1A / CBS 708.71 / DSM 1257 / FGSC 987).